Here is a 780-residue protein sequence, read N- to C-terminus: Neutral ceramidase (780 aa).

Residues 1 to 12 lie on the Cytoplasmic side of the membrane; that stretch reads MAKRTFSNLETF. Residues 13-33 traverse the membrane as a helical; Signal-anchor for type II membrane protein segment; sequence LIFLLVMMSAITVALLSLLFI. Over 34-780 the chain is Lumenal; that stretch reads TSGTIENHKD…TSPAFEVVTI (747 aa). The tract at residues 47-90 is disordered; sequence HFFSTTQSPPATQGSTAAQRSTATQHSTATQSSTATQTSPVPLT. Low complexity predominate over residues 57-85; that stretch reads ATQGSTAAQRSTATQHSTATQSSTATQTS. O-linked (GalNAc...) threonine glycosylation is present at threonine 62. A glycan (O-linked (GalNAc...) serine) is linked at serine 67. O-linked (GalNAc...) threonine glycosylation is found at threonine 68 and threonine 70. Residue serine 73 is glycosylated (O-linked (GalNAc...) serine). O-linked (GalNAc...) threonine glycans are attached at residues threonine 74 and threonine 76. O-linked (GalNAc...) serine glycans are attached at residues serine 78 and serine 79. O-linked (GalNAc...) threonine glycosylation is found at threonine 80, threonine 82, and threonine 84. Residue asparagine 98 is glycosylated (N-linked (GlcNAc...) asparagine). A Ca(2+)-binding site is contributed by leucine 134. N-linked (GlcNAc...) asparagine glycosylation occurs at asparagine 151. A Zn(2+)-binding site is contributed by histidine 194. Asparagine 217 is a glycosylation site (N-linked (GlcNAc...) asparagine). Residue histidine 303 coordinates Zn(2+). N-linked (GlcNAc...) asparagine glycosylation occurs at asparagine 308. Catalysis depends on serine 354, which acts as the Nucleophile. Intrachain disulfides connect cysteine 362/cysteine 376 and cysteine 369/cysteine 384. N-linked (GlcNAc...) asparagine glycosylation is found at asparagine 440 and asparagine 468. A disulfide bond links cysteine 448 and cysteine 498. Residue glutamate 540 coordinates Zn(2+). Asparagine 564 carries an N-linked (GlcNAc...) asparagine glycan. Zn(2+) is bound at residue tyrosine 579. Ca(2+)-binding residues include aspartate 712, serine 714, and threonine 717. Asparagine 730 carries N-linked (GlcNAc...) asparagine glycosylation. The interval 770–780 is required for correct folding and localization; sequence GTSPAFEVVTI. Threonine 779 is a glycosylation site (O-linked (GalNAc...) threonine).

The protein belongs to the neutral ceramidase family. It depends on Zn(2+) as a cofactor. Post-translationally, proteolytic cleavage of the N-terminus removes the signal-anchor and produces a soluble form of the protein. N-glycosylated. Required for enzyme activity. In terms of processing, O-glycosylated. Required to retain it as a type II membrane protein at the cell surface. Post-translationally, phosphorylated. May prevent ubiquitination and subsequent degradation. Ubiquitinated, leading to its degradation by the proteasome. Ubiquitination is triggered by nitric oxide. In terms of tissue distribution, primarily expressed in intestine. Ubiquitously expressed with higher levels in kidney, skeletal muscle and heart. The ubiquitous expression observed for ASAH2 might be an experimental artifact due to the paralog ASAH2B.

It is found in the cell membrane. The protein localises to the membrane raft. The protein resides in the membrane. It localises to the caveola. Its subcellular location is the golgi apparatus membrane. It is found in the mitochondrion. The protein localises to the secreted. The protein resides in the extracellular exosome. It carries out the reaction an N-acylsphing-4-enine + H2O = sphing-4-enine + a fatty acid. The enzyme catalyses N-dodecanoylsphing-4-enine + H2O = dodecanoate + sphing-4-enine. It catalyses the reaction N-hexadecanoylsphing-4-enine + H2O = sphing-4-enine + hexadecanoate. The catalysed reaction is N-octanoylsphing-4-enine + H2O = octanoate + sphing-4-enine. It carries out the reaction N-(hexanoyl)sphing-4-enine + H2O = hexanoate + sphing-4-enine. The enzyme catalyses N-octadecanoylsphing-4-enine + H2O = sphing-4-enine + octadecanoate. It catalyses the reaction N-tetradecanoylsphing-4-enine + H2O = tetradecanoate + sphing-4-enine. The catalysed reaction is N-(9Z-octadecenoyl)-sphing-4-enine + H2O = sphing-4-enine + (9Z)-octadecenoate. It carries out the reaction N-(15Z-tetracosenoyl)-sphing-4-enine + H2O = (15Z)-tetracosenoate + sphing-4-enine. The enzyme catalyses sphinganine + hexadecanoate = N-hexadecanoylsphinganine + H2O. It catalyses the reaction N-(octadecanoyl)-sphinganine + H2O = sphinganine + octadecanoate. It participates in lipid metabolism; sphingolipid metabolism. With respect to regulation, inhibited by dithiothreitol (DTT) and 2-mercaptoethanol. Activity is mildly stimulated by Ca(2+) and Mg(2+), but is not inhibited by EDTA. Activity is inhibited by millimolar levels of Fe(2+), Zn(2+) and Cu(2+). Inhibited by cholesterol. In terms of biological role, plasma membrane ceramidase that hydrolyzes sphingolipid ceramides into sphingosine and free fatty acids at neutral pH. Ceramides, sphingosine, and its phosphorylated form sphingosine-1-phosphate are bioactive lipids that mediate cellular signaling pathways regulating several biological processes including cell proliferation, apoptosis and differentiation. Also catalyzes the reverse reaction allowing the synthesis of ceramides from fatty acids and sphingosine. Together with sphingomyelinase, participates in the production of sphingosine and sphingosine-1-phosphate from the degradation of sphingomyelin, a sphingolipid enriched in the plasma membrane of cells. Also participates in the hydrolysis of ceramides from the extracellular milieu allowing the production of sphingosine-1-phosphate inside and outside cells. This is the case for instance with the digestion of dietary sphingolipids in the intestinal tract. This chain is Neutral ceramidase (ASAH2), found in Homo sapiens (Human).